A 114-amino-acid chain; its full sequence is uncharacterized protein (114 aa).

2 disordered regions span residues 26-45 and 72-98; these read GMKQ…DALG and PKGS…SVQA.

This is an uncharacterized protein from Homo sapiens (Human).